The chain runs to 295 residues: Protoheme IX farnesyltransferase 2 (295 aa).

A run of 9 helical transmembrane segments spans residues Ile9–Ala29, Phe36–Phe56, Leu83–Val103, Leu108–Leu128, Gly135–Ser155, Val163–Phe183, Ile209–Ala229, Gly230–Gly250, and Val264–Gln284.

The protein belongs to the UbiA prenyltransferase family. Protoheme IX farnesyltransferase subfamily.

It localises to the cell inner membrane. It catalyses the reaction heme b + (2E,6E)-farnesyl diphosphate + H2O = Fe(II)-heme o + diphosphate. Its pathway is porphyrin-containing compound metabolism; heme O biosynthesis; heme O from protoheme: step 1/1. Converts heme B (protoheme IX) to heme O by substitution of the vinyl group on carbon 2 of heme B porphyrin ring with a hydroxyethyl farnesyl side group. This Pseudomonas putida (strain GB-1) protein is Protoheme IX farnesyltransferase 2.